Here is an 87-residue protein sequence, read N- to C-terminus: Small ribosomal subunit protein uS17 (87 aa).

This sequence belongs to the universal ribosomal protein uS17 family. As to quaternary structure, part of the 30S ribosomal subunit.

One of the primary rRNA binding proteins, it binds specifically to the 5'-end of 16S ribosomal RNA. The sequence is that of Small ribosomal subunit protein uS17 from Thioalkalivibrio sulfidiphilus (strain HL-EbGR7).